Reading from the N-terminus, the 430-residue chain is 26S protease regulatory subunit 6A (430 aa).

218 to 225 (GPPGTGKT) contributes to the ATP binding site.

Belongs to the AAA ATPase family. As to quaternary structure, component of the 19S proteasome regulatory particle complex. The 26S proteasome consists of a 20S core particle (CP) and two 19S regulatory subunits (RP). The regulatory particle is made of a lid composed of 9 subunits, a base containing 6 ATPases including the PSMC3 homolog rpt-5 and few additional components.

It is found in the cytoplasm. Its subcellular location is the nucleus. In terms of biological role, component of the 26S proteasome, a multiprotein complex involved in the ATP-dependent degradation of ubiquitinated proteins. This complex plays a key role in the maintenance of protein homeostasis by removing misfolded or damaged proteins, which could impair cellular functions, and by removing proteins whose functions are no longer required. Therefore, the proteasome participates in numerous cellular processes, including cell cycle progression, apoptosis, or DNA damage repair. Belongs to the heterohexameric ring of AAA (ATPases associated with diverse cellular activities) proteins that unfolds ubiquitinated target proteins that are concurrently translocated into a proteolytic chamber and degraded into peptides. The sequence is that of 26S protease regulatory subunit 6A from Caenorhabditis elegans.